Here is a 524-residue protein sequence, read N- to C-terminus: Bifunctional purine biosynthesis protein PurH (524 aa).

The 144-residue stretch at 1-144 (MTRRALVSVS…KNSAHVGVVV (144 aa)) folds into the MGS-like domain.

The protein belongs to the PurH family.

The catalysed reaction is (6R)-10-formyltetrahydrofolate + 5-amino-1-(5-phospho-beta-D-ribosyl)imidazole-4-carboxamide = 5-formamido-1-(5-phospho-D-ribosyl)imidazole-4-carboxamide + (6S)-5,6,7,8-tetrahydrofolate. The enzyme catalyses IMP + H2O = 5-formamido-1-(5-phospho-D-ribosyl)imidazole-4-carboxamide. Its pathway is purine metabolism; IMP biosynthesis via de novo pathway; 5-formamido-1-(5-phospho-D-ribosyl)imidazole-4-carboxamide from 5-amino-1-(5-phospho-D-ribosyl)imidazole-4-carboxamide (10-formyl THF route): step 1/1. The protein operates within purine metabolism; IMP biosynthesis via de novo pathway; IMP from 5-formamido-1-(5-phospho-D-ribosyl)imidazole-4-carboxamide: step 1/1. The chain is Bifunctional purine biosynthesis protein PurH from Anaeromyxobacter sp. (strain K).